Here is a 142-residue protein sequence, read N- to C-terminus: Putative FK506-binding protein 9-like protein (142 aa).

The PPIase FKBP-type domain occupies 1 to 49 (MDMGLREMCVGEKRTVIIPPHLGYGEAGVDGEVPGSAVLVFDIELLELV). 2 consecutive EF-hand domains span residues 60–95 (WNGE…QVAS) and 105–140 (DAEL…AKQD). Ca(2+)-binding residues include D118, N120, D122, K124, and E129.

This is Putative FK506-binding protein 9-like protein (FKBP9P1) from Homo sapiens (Human).